We begin with the raw amino-acid sequence, 302 residues long: Probable proteasome inhibitor (302 aa).

Ala2 carries the post-translational modification N-acetylalanine. Disordered regions lie at residues 151-188 and 259-302; these read LDGKPKPVASRAQSSSETNEEPRYYDDTPNPLGPQIHP and ARFD…SDFI. The segment covering 259–269 has biased composition (pro residues); it reads ARFDPYGPPGV.

Belongs to the proteasome inhibitor PI31 family.

Its function is as follows. Could play an important role in control of proteasome function. Inhibits the hydrolysis of protein and peptide substrates by the 20S proteasome. This chain is Probable proteasome inhibitor, found in Arabidopsis thaliana (Mouse-ear cress).